A 208-amino-acid polypeptide reads, in one-letter code: Imidazoleglycerol-phosphate dehydratase (208 aa).

This sequence belongs to the imidazoleglycerol-phosphate dehydratase family.

The protein resides in the cytoplasm. The catalysed reaction is D-erythro-1-(imidazol-4-yl)glycerol 3-phosphate = 3-(imidazol-4-yl)-2-oxopropyl phosphate + H2O. The protein operates within amino-acid biosynthesis; L-histidine biosynthesis; L-histidine from 5-phospho-alpha-D-ribose 1-diphosphate: step 6/9. This Hyphomonas neptunium (strain ATCC 15444) protein is Imidazoleglycerol-phosphate dehydratase.